We begin with the raw amino-acid sequence, 558 residues long: Formate--tetrahydrofolate ligase (558 aa).

67–74 (TPAGEGKT) contributes to the ATP binding site.

This sequence belongs to the formate--tetrahydrofolate ligase family.

The enzyme catalyses (6S)-5,6,7,8-tetrahydrofolate + formate + ATP = (6R)-10-formyltetrahydrofolate + ADP + phosphate. It participates in one-carbon metabolism; tetrahydrofolate interconversion. This chain is Formate--tetrahydrofolate ligase, found in Ruegeria sp. (strain TM1040) (Silicibacter sp.).